The primary structure comprises 751 residues: NAD(P)H-quinone oxidoreductase subunit 5, chloroplastic (751 aa).

The next 16 helical transmembrane spans lie at 9–29 (WIIPFIPLTVPLLIGAGLIIF), 40–60 (WAFPSILLLSLVMLFSTKLSI), 89–109 (VDPLTSIMSMLITTVGILVLI), 125–145 (FAYLSFFNTSMLGLVTSSNFI), 147–167 (IYIFWELVGMCSYLLIGFWFT), 185–205 (GDFGLLLGILGLYWLTGSFEF), 219–239 (NEVHFLVGTVCTFLLFAGAVA), 258–278 (TPISALIHAATMVAAGIFLVA), 280–300 (LFPLLIVTPFILNLIALVGII), 327–347 (LGYMMLALGMGSYRAALFHLI), 354–374 (ALLFLGSGCVIHSMEAIVGYS), 396–416 (TAFLLGTLSLSGIPPLACFWS), 425–445 (WLYSPIFAIISWATVGFTAFY), 543–563 (LFPLLVLIIFTGVIGFIGIPF), 599–619 (FLTNATLSVSIAYSGIVLASF), and 719–739 (ISSYLFLYLLYASIFLLIYYF).

This sequence belongs to the complex I subunit 5 family. As to quaternary structure, NDH is composed of at least 16 different subunits, 5 of which are encoded in the nucleus.

It is found in the plastid. The protein resides in the chloroplast thylakoid membrane. The catalysed reaction is a plastoquinone + NADH + (n+1) H(+)(in) = a plastoquinol + NAD(+) + n H(+)(out). The enzyme catalyses a plastoquinone + NADPH + (n+1) H(+)(in) = a plastoquinol + NADP(+) + n H(+)(out). NDH shuttles electrons from NAD(P)H:plastoquinone, via FMN and iron-sulfur (Fe-S) centers, to quinones in the photosynthetic chain and possibly in a chloroplast respiratory chain. The immediate electron acceptor for the enzyme in this species is believed to be plastoquinone. Couples the redox reaction to proton translocation, and thus conserves the redox energy in a proton gradient. The polypeptide is NAD(P)H-quinone oxidoreductase subunit 5, chloroplastic (ndhF) (Fagopyrum esculentum subsp. ancestrale (Wild buckwheat)).